Consider the following 322-residue polypeptide: Malate dehydrogenase (322 aa).

Residues 10–15 (GSGQIG) and aspartate 34 each bind NAD(+). Residues arginine 83 and arginine 89 each coordinate substrate. Residues asparagine 96 and 119-121 (ITN) each bind NAD(+). Asparagine 121 and arginine 152 together coordinate substrate. Histidine 176 (proton acceptor) is an active-site residue.

This sequence belongs to the LDH/MDH superfamily. MDH type 3 family.

The enzyme catalyses (S)-malate + NAD(+) = oxaloacetate + NADH + H(+). In terms of biological role, catalyzes the reversible oxidation of malate to oxaloacetate. This chain is Malate dehydrogenase, found in Nitrobacter hamburgensis (strain DSM 10229 / NCIMB 13809 / X14).